The sequence spans 244 residues: Small ribosomal subunit protein uS2m (244 aa).

The protein belongs to the universal ribosomal protein uS2 family.

The protein localises to the mitochondrion. This is Small ribosomal subunit protein uS2m (mrps2) from Dictyostelium discoideum (Social amoeba).